A 912-amino-acid polypeptide reads, in one-letter code: Androgen receptor (912 aa).

A modulating region spans residues 1-550 (MEVQLGLGRV…PIDYYFPPQK (550 aa)). The segment at 1–579 (MEVQLGLGRV…GSCKVFFKRA (579 aa)) is interaction with ZNF318. 2 disordered regions span residues 35 to 156 (QNPG…GPTF) and 204 to 236 (QQQQ…YLGG). Residue S69 is modified to Phosphoserine; by CDK9. The residue at position 82 (S82) is a Phosphoserine. Over residues 204 to 213 (QQQQEVVSEG) the composition is skewed to low complexity. The segment covering 226–236 (PTSSKDSYLGG) has biased composition (polar residues). Y233 bears the Phosphotyrosine; by CSK mark. At S266 the chain carries Phosphoserine. Residue Y277 is modified to Phosphotyrosine; by CSK and TNK2. Residues Y315, Y354, Y365, and Y370 each carry the phosphotyrosine; by CSK modification. The residue at position 371 (Y371) is a Phosphotyrosine; by CSK and TNK2. Residues 375 to 394 (LSLAGPPPPPPSPHPHARIK) form a disordered region. Residues 379 to 388 (GPPPPPPSPH) show a composition bias toward pro residues. Residue K394 forms a Glycyl lysine isopeptide (Lys-Gly) (interchain with G-Cter in SUMO) linkage. A Phosphotyrosine; by CSK modification is found at Y401. Residues 452–490 (LYGPCGGSGGGGTGESVSVTPYGYTRPQQGLTGQEGDFP) form a disordered region. The span at 455–465 (PCGGSGGGGTG) shows a compositional bias: gly residues. Residue K513 forms a Glycyl lysine isopeptide (Lys-Gly) (interchain with G-Cter in SUMO) linkage. Phosphotyrosine; by CSK occurs at positions 527 and 544. Positions 544-911 (YYFPPQKTCL…GKVKPIYFHT (368 aa)) are interaction with LPXN. Positions 551–624 (TCLICGDEAS…AGMTLGARRL (74 aa)) form a DNA-binding region, nuclear receptor. NR C4-type zinc fingers lie at residues 552-572 (CLIC…CGSC) and 588-612 (CASR…LRKC). An interaction with HIPK3 region spans residues 564–654 (YGALTCGSCK…TEETTQKLTV (91 aa)). The segment at 584–911 (QKYLCASRND…GKVKPIYFHT (328 aa)) is interaction with CCAR1. The interaction with KAT7 stretch occupies residues 617–911 (MTLGARRLKK…GKVKPIYFHT (295 aa)). A Phosphoserine; by STK4/MST1 modification is found at S643. One can recognise an NR LBD domain in the interval 661 to 892 (ECQPIFLNVL…DFPEMMAEII (232 aa)). N698 and R745 together coordinate 17beta-hydroxy-5alpha-androstan-3-one. Residues K838 and K840 each participate in a glycyl lysine isopeptide (Lys-Gly) (interchain with G-Cter in ubiquitin) cross-link. Residue T870 participates in 17beta-hydroxy-5alpha-androstan-3-one binding. Y908 bears the Phosphotyrosine; by CSK mark.

The protein belongs to the nuclear hormone receptor family. NR3 subfamily. Binds DNA as a homodimer. Part of a ternary complex containing AR, EFCAB6/DJBP and PARK7. Interacts with HIPK3 and NR0B2 in the presence of androgen. The ligand binding domain interacts with KAT7/HBO1 in the presence of dihydrotestosterone. Interacts with EFCAB6/DJBP, PQBP1, RANBP9, RBAK, SPDEF, SRA1, TGFB1I1 and RREB1. Interacts with ZMIZ1/ZIMP10 and ZMIZ2/ZMIP7 which both enhance its transactivation activity. Interacts with SLC30A9 and RAD54L2/ARIP4. Interacts with MACROD1 (via macro domain). Interacts via the ligand-binding domain with LXXLL and FXXLF motifs from NCOA1, NCOA2, NCOA3 and MAGEA11. Interacts (via nuclear receptor DNA binding domain and nuclear receptor ligand binding domain) with NCOA4. The AR N-terminal poly-Gln region binds Ran resulting in enhancement of AR-mediated transactivation. Ran-binding decreases as the poly-Gln length increases. Interacts with HIP1 (via coiled coil domain). Interacts (via ligand-binding domain) with TRIM68. Interacts with TNK2. Interacts with USP26. Interacts with RNF6. Interacts (regulated by RNF6 probably through polyubiquitination) with RNF14; regulates AR transcriptional activity. Interacts with PRMT2 and TRIM24. Interacts with RACK1. Interacts with RANBP10; this interaction enhances dihydrotestosterone-induced AR transcriptional activity. Interacts with PRPF6 in a hormone-independent way; this interaction enhances dihydrotestosterone-induced AR transcriptional activity. Interacts with STK4/MST1. Interacts with ZIPK/DAPK3. Interacts with LPXN. Interacts with MAK. Part of a complex containing AR, MAK and NCOA3. Interacts with CRY1. Interacts with CCAR1 and GATA2. Interacts with ZNF318. Interacts with BUD31. Interacts with ARID4A. Interacts with ARID4B. Interacts (via NR LBD domain) with ZBTB7A; the interaction is direct and androgen-dependent. Interacts with NCOR1. Interacts with NCOR2. Interacts with CRY2 in a ligand-dependent manner. In terms of processing, phosphorylation by TNK2 enhances the DNA-binding and transcriptional activity. Phosphorylation at Ser-69 by CDK9 regulates AR promoter selectivity and cell growth. Post-translationally, sumoylated on Lys-394 (major) and Lys-513. Ubiquitinated. Deubiquitinated by USP26. 'Lys-6' and 'Lys-27'-linked polyubiquitination by RNF6 modulates AR transcriptional activity and specificity. Palmitoylated by ZDHHC7 and ZDHHC21. Palmitoylation is required for plasma membrane targeting and for rapid intracellular signaling via ERK and AKT kinases and cAMP generation.

The protein localises to the nucleus. The protein resides in the cytoplasm. In terms of biological role, steroid hormone receptors are ligand-activated transcription factors that regulate eukaryotic gene expression and affect cellular proliferation and differentiation in target tissues. Transcription factor activity is modulated by bound coactivator and corepressor proteins like ZBTB7A that recruits NCOR1 and NCOR2 to the androgen response elements/ARE on target genes, negatively regulating androgen receptor signaling and androgen-induced cell proliferation. Transcription activation is also down-regulated by NR0B2. Activated, but not phosphorylated, by HIPK3 and ZIPK/DAPK3. The chain is Androgen receptor (AR) from Crocuta crocuta (Spotted hyena).